The primary structure comprises 225 residues: Ribosomal RNA large subunit methyltransferase E (225 aa).

5 residues coordinate S-adenosyl-L-methionine: glycine 64, tryptophan 66, aspartate 93, aspartate 109, and aspartate 138. The Proton acceptor role is filled by lysine 178.

This sequence belongs to the class I-like SAM-binding methyltransferase superfamily. RNA methyltransferase RlmE family.

It is found in the cytoplasm. It catalyses the reaction uridine(2552) in 23S rRNA + S-adenosyl-L-methionine = 2'-O-methyluridine(2552) in 23S rRNA + S-adenosyl-L-homocysteine + H(+). In terms of biological role, specifically methylates the uridine in position 2552 of 23S rRNA at the 2'-O position of the ribose in the fully assembled 50S ribosomal subunit. The protein is Ribosomal RNA large subunit methyltransferase E of Cupriavidus pinatubonensis (strain JMP 134 / LMG 1197) (Cupriavidus necator (strain JMP 134)).